Reading from the N-terminus, the 177-residue chain is Large ribosomal subunit protein uL6 (177 aa).

Belongs to the universal ribosomal protein uL6 family. In terms of assembly, part of the 50S ribosomal subunit.

In terms of biological role, this protein binds to the 23S rRNA, and is important in its secondary structure. It is located near the subunit interface in the base of the L7/L12 stalk, and near the tRNA binding site of the peptidyltransferase center. This is Large ribosomal subunit protein uL6 from Agrobacterium fabrum (strain C58 / ATCC 33970) (Agrobacterium tumefaciens (strain C58)).